A 267-amino-acid polypeptide reads, in one-letter code: Putative transcription factor Ovo-like 1 (267 aa).

4 consecutive C2H2-type zinc fingers follow at residues Phe118–His140, His146–His168, Tyr174–His197, and Tyr213–His235.

In terms of tissue distribution, expressed in fetal kidney, and also in adult pancreas and placenta. Not expressed in intestine, peripheral blood lymphocytes and ovary.

Its subcellular location is the nucleus. Functionally, putative transcription factor. Involved in hair formation and spermatogenesis. May function in the differentiation and/or maintenance of the urogenital system. The protein is Putative transcription factor Ovo-like 1 (OVOL1) of Homo sapiens (Human).